A 479-amino-acid polypeptide reads, in one-letter code: Probable aspartic-type endopeptidase OPSB (479 aa).

A signal peptide spans 1–19 (MRGDSFIWSLTTAASLLYA). The 336-residue stretch at 58 to 393 (SGKTVSQDLD…DLDNNEISIA (336 aa)) folds into the Peptidase A1 domain. Residue N68 is glycosylated (N-linked (GlcNAc...) asparagine). Residue D76 is part of the active site. Residue N121 is glycosylated (N-linked (GlcNAc...) asparagine). The active site involves D275. N-linked (GlcNAc...) asparagine glycosylation is present at N398. Positions 435 to 454 (LSGIETGVPGARPTSRGAAP) are disordered. Residue G451 is the site of GPI-anchor amidated glycine attachment. Positions 452 to 479 (AAPTMRPDVTFGVAAAGLAGAGILFAFM) are cleaved as a propeptide — removed in mature form.

This sequence belongs to the peptidase A1 family.

It is found in the cell membrane. Functionally, probable GPI-anchored aspartic-type endopeptidase which contributes to virulence. In Arthroderma otae (strain ATCC MYA-4605 / CBS 113480) (Microsporum canis), this protein is Probable aspartic-type endopeptidase OPSB (OPSB).